We begin with the raw amino-acid sequence, 72 residues long: MAKEDTLEFPGVVKELLPNATFRVELENGHEIIAHTAGKMRKNRIRVLAGDKVQVEMTPYDLTKGRINYRFK.

Residues 1 to 72 (MAKEDTLEFP…TKGRINYRFK (72 aa)) enclose the S1-like domain.

This sequence belongs to the IF-1 family. As to quaternary structure, component of the 30S ribosomal translation pre-initiation complex which assembles on the 30S ribosome in the order IF-2 and IF-3, IF-1 and N-formylmethionyl-tRNA(fMet); mRNA recruitment can occur at any time during PIC assembly.

Its subcellular location is the cytoplasm. One of the essential components for the initiation of protein synthesis. Stabilizes the binding of IF-2 and IF-3 on the 30S subunit to which N-formylmethionyl-tRNA(fMet) subsequently binds. Helps modulate mRNA selection, yielding the 30S pre-initiation complex (PIC). Upon addition of the 50S ribosomal subunit IF-1, IF-2 and IF-3 are released leaving the mature 70S translation initiation complex. This is Translation initiation factor IF-1 from Roseobacter denitrificans (strain ATCC 33942 / OCh 114) (Erythrobacter sp. (strain OCh 114)).